Here is a 46-residue protein sequence, read N- to C-terminus: Defensin Tk-AMP-D6 (46 aa).

4 cysteine pairs are disulfide-bonded: C3–C46, C14–C34, C20–C40, and C24–C42.

Plant defense peptide. The protein is Defensin Tk-AMP-D6 of Triticum kiharae (Wheat).